A 212-amino-acid polypeptide reads, in one-letter code: Ubiquitin-like protein MDY2 (212 aa).

One can recognise a Ubiquitin-like domain in the interval 74-152 (VHLTLKKIQA…TITVMIKPNP (79 aa)). The disordered stretch occupies residues 150-177 (PNPTISKEPEAEKSTNSPAPAPPQELTV).

Interacts with GET4.

The protein localises to the cytoplasm. The protein resides in the cytosol. Its subcellular location is the nucleus. In terms of biological role, required for efficient mating. Involved in the production of alpha-factor, the KAR9 and TUB1 location to the shmoo tip and nuclear migration into pheromone-induced shmoos. In Saccharomyces cerevisiae (strain ATCC 204508 / S288c) (Baker's yeast), this protein is Ubiquitin-like protein MDY2 (MDY2).